A 284-amino-acid chain; its full sequence is Nucleotide-binding protein SPO0713 (284 aa).

3 to 10 is a binding site for ATP; it reads GPSGAGRS. Residue 50–53 coordinates GTP; sequence DARN.

Belongs to the RapZ-like family.

In terms of biological role, displays ATPase and GTPase activities. This is Nucleotide-binding protein SPO0713 from Ruegeria pomeroyi (strain ATCC 700808 / DSM 15171 / DSS-3) (Silicibacter pomeroyi).